The chain runs to 261 residues: Probable membrane transporter protein XF_0764 (261 aa).

8 helical membrane-spanning segments follow: residues 6–26 (LIVTIGSGGLVGFALGLLGGG), 29–49 (ILATPLLLYVVGVTNPHIAIG), 78–98 (VIFALVGTLGAFLGSSIGMLI), 99–119 (DGQRLLLLFGLLMAMVGLLML), 150–170 (AASGFFGIGGGFLIVPALIFA), 175–195 (TINAIGSSLLAVGTFGLITTL), 205–225 (WTIAMEFIVGGITGGGLGTLL), and 239–259 (VFGLIVIAVAIYVIWRSWASL).

Belongs to the 4-toluene sulfonate uptake permease (TSUP) (TC 2.A.102) family.

It localises to the cell membrane. The sequence is that of Probable membrane transporter protein XF_0764 from Xylella fastidiosa (strain 9a5c).